A 203-amino-acid polypeptide reads, in one-letter code: Thymidylate kinase (203 aa).

9–16 (GPEGAGKT) serves as a coordination point for ATP.

This sequence belongs to the thymidylate kinase family.

It catalyses the reaction dTMP + ATP = dTDP + ADP. Its function is as follows. Phosphorylation of dTMP to form dTDP in both de novo and salvage pathways of dTTP synthesis. This is Thymidylate kinase from Staphylococcus epidermidis (strain ATCC 35984 / DSM 28319 / BCRC 17069 / CCUG 31568 / BM 3577 / RP62A).